The following is a 300-amino-acid chain: tRNA-cytidine(32) 2-sulfurtransferase (300 aa).

Positions 57–62 (SGGKDS) match the PP-loop motif motif. Residues C132, C135, and C223 each coordinate [4Fe-4S] cluster.

This sequence belongs to the TtcA family. As to quaternary structure, homodimer. Mg(2+) is required as a cofactor. The cofactor is [4Fe-4S] cluster.

Its subcellular location is the cytoplasm. It carries out the reaction cytidine(32) in tRNA + S-sulfanyl-L-cysteinyl-[cysteine desulfurase] + AH2 + ATP = 2-thiocytidine(32) in tRNA + L-cysteinyl-[cysteine desulfurase] + A + AMP + diphosphate + H(+). Its pathway is tRNA modification. Catalyzes the ATP-dependent 2-thiolation of cytidine in position 32 of tRNA, to form 2-thiocytidine (s(2)C32). The sulfur atoms are provided by the cysteine/cysteine desulfurase (IscS) system. This is tRNA-cytidine(32) 2-sulfurtransferase from Xanthomonas campestris pv. campestris (strain 8004).